A 545-amino-acid polypeptide reads, in one-letter code: Sterol O-acyltransferase 1 (545 aa).

Methionine 1 is subject to N-acetylmethionine. The disordered stretch occupies residues 1-24; it reads MVGEETSLRNRLSRSAENPEQDEA. The Cytoplasmic portion of the chain corresponds to 1–133; that stretch reads MVGEETSLRN…LDELFEVDHI (133 aa). A Phosphoserine modification is found at serine 7. The span at 9–18 shows a compositional bias: polar residues; the sequence is RNRLSRSAEN. A cholesterol-binding site is contributed by histidine 132. A helical transmembrane segment spans residues 134–155; that stretch reads RTIYHMFIALLIIFILSTLVVD. The Lumenal segment spans residues 156–175; it reads YIDEGRLVLEFSLLAYAFGQ. A helical membrane pass occupies residues 176-201; sequence FPIVIWTWWAMFLSTLAIPYFLFQRW. Residues 202 to 213 are Cytoplasmic-facing; sequence AHGYSKSSHPLI. A helical transmembrane segment spans residues 214–239; it reads YSLIHGAFFLVFQLGILGFIPTYVVL. The Lumenal portion of the chain corresponds to 240–247; sequence AYTLPPAS. A helical transmembrane segment spans residues 248–271; sequence RFILILEQIRLVMKAHSYVRENVP. The Cytoplasmic portion of the chain corresponds to 272 to 314; it reads RVLSAAKEKSSTVPVPTVNQYLYFLFAPTLIYRDSYPRTPTVR. The chain crosses the membrane as a helical span at residues 315–347; it reads WGYVAMQFLQVFGCLFYVYYIFERLCAPLFRNI. Residues 348–364 are Lumenal-facing; the sequence is KQEPFSARVLVLCVFNS. Residues 365–390 form a helical membrane-spanning segment; the sequence is ILPGVLMLFLSFFAFLHCWLNAFAEM. Residues 391–438 are Cytoplasmic-facing; the sequence is LRFGDRMFYKDWWNSTSYSNYYRTWNVVVHDWLYYYVYKDLLWFFSKR. Positions 398-404 match the FYXDWWN motif motif; the sequence is FYKDWWN. 6 residues coordinate an acyl-CoA: asparagine 410, arginine 413, asparagine 416, histidine 420, tyrosine 428, and serine 451. The chain crosses the membrane as a helical span at residues 439-463; the sequence is FRPAAMLAVFALSAVVHEYALAVCL. Residue histidine 455 is part of the active site. Topologically, residues 464 to 469 are lumenal; that stretch reads SYFYPV. A helical transmembrane segment spans residues 470–485; it reads LFVLFMFFGMAFNFIV. At 486 to 491 the chain is on the cytoplasmic side; sequence NDSRKR. Residues 492–523 traverse the membrane as a helical segment; sequence PVWNIMVRASLFLGHGVILCFYSQEWYARQRC. Cysteine 523 and cysteine 541 form a disulfide bridge. The Lumenal portion of the chain corresponds to 524–545; it reads PLKNPTFLDYVRPRTWTCRYVF.

The protein belongs to the membrane-bound acyltransferase family. Sterol o-acyltransferase subfamily. As to quaternary structure, may form homo- or heterodimers. Interacts with UBIAD1.

It is found in the endoplasmic reticulum membrane. It catalyses the reaction a sterol + a long-chain fatty acyl-CoA = a long-chain 3-hydroxysterol ester + CoA. The catalysed reaction is cholesterol + an acyl-CoA = a cholesterol ester + CoA. It carries out the reaction cholesterol + (9Z)-octadecenoyl-CoA = cholesteryl (9Z-octadecenoate) + CoA. The enzyme catalyses cholesterol + hexadecanoyl-CoA = cholesteryl hexadecanoate + CoA. It catalyses the reaction octadecanoyl-CoA + cholesterol = cholesteryl octadecanoate + CoA. The catalysed reaction is (9Z,12Z)-octadecadienoyl-CoA + cholesterol = cholesteryl (9Z,12Z)-octadecadienoate + CoA. It carries out the reaction (5Z,8Z,11Z,14Z)-eicosatetraenoyl-CoA + cholesterol = cholesteryl (5Z,8Z,11Z,14Z)-eicosatetraenoate + CoA. The enzyme catalyses (9Z)-hexadecenoyl-CoA + cholesterol = cholesteryl (9Z)-hexadecenoate + CoA. It catalyses the reaction (11Z)-octadecenoyl-CoA + cholesterol = cholesteryl (11Z)-octadecenoate + CoA. The catalysed reaction is (7Z)-octadecenoyl-CoA + cholesterol = cholesteryl (7Z)-octadecenoate + CoA. Functionally, catalyzes the formation of fatty acid-cholesterol esters, which are less soluble in membranes than cholesterol. Plays a role in lipoprotein assembly and dietary cholesterol absorption. Preferentially utilizes oleoyl-CoA ((9Z)-octadecenoyl-CoA) as substrate: shows a higher activity towards an acyl-CoA substrate with a double bond at the delta-9 position (9Z) than towards saturated acyl-CoA or an unsaturated acyl-CoA with a double bond at the delta-7 (7Z) or delta-11 (11Z) positions. In Rattus norvegicus (Rat), this protein is Sterol O-acyltransferase 1.